A 2116-amino-acid polypeptide reads, in one-letter code: Non-structural polyprotein p200 (2116 aa).

The segment at glutamate 36–isoleucine 49 is required for efficient proteolysis and P150-P90 interaction. In terms of domain architecture, Alphavirus-like MT spans valine 57–glutamine 247. The span at glycine 457 to aspartate 467 shows a compositional bias: basic and acidic residues. Disordered regions lie at residues glycine 457–arginine 477 and alanine 712–aspartate 805. 2 stretches are compositionally biased toward pro residues: residues serine 721 to proline 730 and threonine 745 to alanine 776. 3 short sequence motifs (pxxPxR; class II SH3-binding) span residues proline 727–arginine 732, proline 747–arginine 752, and proline 761–arginine 766. Residues serine 806–alanine 985 form the Macro domain. The segment at valine 992–proline 1031 is disordered. One can recognise a Peptidase C27 domain in the interval leucine 1000–glycine 1301. Cysteine 1152 acts as the For cysteine protease activity in catalysis. The interval cysteine 1152–alanine 1183 is interaction with host CALM1. Residues cysteine 1175, cysteine 1178, cysteine 1227, and histidine 1273 each contribute to the Zn(2+) site. The tract at residues phenylalanine 1193–serine 1228 is EF-hand-like. Histidine 1273 functions as the For cysteine protease activity in the catalytic mechanism. One can recognise a (+)RNA virus helicase ATP-binding domain in the interval glutamate 1320 to serine 1468. A ribonucleoside 5'-triphosphate is bound at residue methionine 1352–threonine 1359. One can recognise a (+)RNA virus helicase C-terminal domain in the interval arginine 1469–aspartate 1609. The tract at residues tyrosine 1700–leucine 1900 is involved in P150-P90 interaction. Residues threonine 1870–alanine 1981 enclose the RdRp catalytic domain. Residues leucine 1902–glutamate 1906 carry the Human RB1 binding motif.

Interacts with RNA-directed RNA polymerase p90. Interacts with host CALM1; this interaction is necessary for the protease activity and viral infectivity. Interacts with host C1QBP. Interacts with the capsid protein. As to quaternary structure, interacts with human RB1/retinoblastoma protein. Interacts with protease/methyltransferase p150. The cofactor is Zn(2+). In terms of processing, specific enzymatic cleavage by its own cysteine protease yield mature proteins p150 and p90.

Its subcellular location is the host membrane. The protein resides in the host cytoplasm. It localises to the host perinuclear region. The catalysed reaction is RNA(n) + a ribonucleoside 5'-triphosphate = RNA(n+1) + diphosphate. It catalyses the reaction a ribonucleoside 5'-triphosphate + H2O = a ribonucleoside 5'-diphosphate + phosphate + H(+). It carries out the reaction ATP + H2O = ADP + phosphate + H(+). Functionally, probable principal replicase for the negative-strand DNA, which replicates the 40S (+) genomic RNA into (-) antigenomic RNA. It cannot replicate the (-) into (+) until cleaved into p150 and p90 mature proteins. In terms of biological role, protease that cleaves the precursor polyprotein into two mature products. Together with RNA-directed RNA polymerase p90, replicates the 40S genomic and antigenomic RNA by recognizing replications specific signals. The heterodimer P150/p90 is probably the principal replicase for positive-strand genomic RNA and the 24S subgenomic RNA, which codes for structural proteins. Responsible for the mRNA-capping of the viral mRNAs. This function is necessary since all viral RNAs are synthesized in the cytoplasm, and host capping enzymes are restricted to the nucleus. Forms fibers late in the infection that may be involved in cell-to-cell spread of the virus RNA in the absence of virus particle formation. Together with protease/methyltransferase p150, replicates the 40S genomic and antigenomic RNA by recognizing replications specific signals. The heterodimer P150/p90 is probably the principal replicase for positive-strand genomic RNA and the 24S subgenomic RNA, which codes for structural proteins. A helicase activity is probably also present. The protein is Non-structural polyprotein p200 of Rubella virus (strain Therien) (RUBV).